Here is a 227-residue protein sequence, read N- to C-terminus: Cytochrome c oxidase subunit 2 (227 aa).

Over 1–14 the chain is Mitochondrial intermembrane; the sequence is MAYPFQLGLQDATS. A helical membrane pass occupies residues 15–45; sequence PIMEELMNFHDHTLMIVFLISTLVLYIISLM. Topologically, residues 46–59 are mitochondrial matrix; it reads LTTKLTHTSTMDAQ. Residues 60 to 87 traverse the membrane as a helical segment; it reads EVETVWTILPAVILIMIALPSLRILYMM. Topologically, residues 88-227 are mitochondrial intermembrane; that stretch reads DEINNPVLTV…HFENWSTSMI (140 aa). Positions 161, 196, 198, 200, 204, and 207 each coordinate Cu cation. Glu-198 is a Mg(2+) binding site.

It belongs to the cytochrome c oxidase subunit 2 family. As to quaternary structure, component of the cytochrome c oxidase (complex IV, CIV), a multisubunit enzyme composed of 14 subunits. The complex is composed of a catalytic core of 3 subunits MT-CO1, MT-CO2 and MT-CO3, encoded in the mitochondrial DNA, and 11 supernumerary subunits COX4I, COX5A, COX5B, COX6A, COX6B, COX6C, COX7A, COX7B, COX7C, COX8 and NDUFA4, which are encoded in the nuclear genome. The complex exists as a monomer or a dimer and forms supercomplexes (SCs) in the inner mitochondrial membrane with NADH-ubiquinone oxidoreductase (complex I, CI) and ubiquinol-cytochrome c oxidoreductase (cytochrome b-c1 complex, complex III, CIII), resulting in different assemblies (supercomplex SCI(1)III(2)IV(1) and megacomplex MCI(2)III(2)IV(2)). Found in a complex with TMEM177, COA6, COX18, COX20, SCO1 and SCO2. Interacts with TMEM177 in a COX20-dependent manner. Interacts with COX20. Interacts with COX16. Requires Cu cation as cofactor.

It is found in the mitochondrion inner membrane. The catalysed reaction is 4 Fe(II)-[cytochrome c] + O2 + 8 H(+)(in) = 4 Fe(III)-[cytochrome c] + 2 H2O + 4 H(+)(out). Functionally, component of the cytochrome c oxidase, the last enzyme in the mitochondrial electron transport chain which drives oxidative phosphorylation. The respiratory chain contains 3 multisubunit complexes succinate dehydrogenase (complex II, CII), ubiquinol-cytochrome c oxidoreductase (cytochrome b-c1 complex, complex III, CIII) and cytochrome c oxidase (complex IV, CIV), that cooperate to transfer electrons derived from NADH and succinate to molecular oxygen, creating an electrochemical gradient over the inner membrane that drives transmembrane transport and the ATP synthase. Cytochrome c oxidase is the component of the respiratory chain that catalyzes the reduction of oxygen to water. Electrons originating from reduced cytochrome c in the intermembrane space (IMS) are transferred via the dinuclear copper A center (CU(A)) of subunit 2 and heme A of subunit 1 to the active site in subunit 1, a binuclear center (BNC) formed by heme A3 and copper B (CU(B)). The BNC reduces molecular oxygen to 2 water molecules using 4 electrons from cytochrome c in the IMS and 4 protons from the mitochondrial matrix. This is Cytochrome c oxidase subunit 2 (MT-CO2) from Apodemus semotus (Taiwan field mouse).